We begin with the raw amino-acid sequence, 615 residues long: DNA mismatch repair protein MutL (615 aa).

A disordered region spans residues 362–397 (HFAEPAVREPVAPRYSPAPASGGRPAASWPNAQPGY). The segment covering 378-391 (PAPASGGRPAASWP) has biased composition (low complexity).

This sequence belongs to the DNA mismatch repair MutL/HexB family.

Its function is as follows. This protein is involved in the repair of mismatches in DNA. It is required for dam-dependent methyl-directed DNA mismatch repair. May act as a 'molecular matchmaker', a protein that promotes the formation of a stable complex between two or more DNA-binding proteins in an ATP-dependent manner without itself being part of a final effector complex. The sequence is that of DNA mismatch repair protein MutL from Escherichia fergusonii (strain ATCC 35469 / DSM 13698 / CCUG 18766 / IAM 14443 / JCM 21226 / LMG 7866 / NBRC 102419 / NCTC 12128 / CDC 0568-73).